A 326-amino-acid polypeptide reads, in one-letter code: Pyruvate dehydrogenase E1 component subunit alpha (326 aa).

In terms of assembly, heterodimer of an alpha and a beta chain. The cofactor is thiamine diphosphate.

The catalysed reaction is N(6)-[(R)-lipoyl]-L-lysyl-[protein] + pyruvate + H(+) = N(6)-[(R)-S(8)-acetyldihydrolipoyl]-L-lysyl-[protein] + CO2. Functionally, the pyruvate dehydrogenase complex catalyzes the overall conversion of pyruvate to acetyl-CoA and CO(2). It contains multiple copies of three enzymatic components: pyruvate dehydrogenase (E1), dihydrolipoamide acetyltransferase (E2) and lipoamide dehydrogenase (E3). In Rickettsia felis (strain ATCC VR-1525 / URRWXCal2) (Rickettsia azadi), this protein is Pyruvate dehydrogenase E1 component subunit alpha (pdhA).